We begin with the raw amino-acid sequence, 418 residues long: Protein MAEA homolog (418 aa).

In terms of domain architecture, LisH spans 141 to 173 (NNTKLKRILVDYMLRMSYFETATKLSESSNIMD). The 58-residue stretch at 179–236 (IFREAKKVIDALKNREVASALTWCADNKTRLKKSKSKFEFQLRLQEFIELVRVDTAES) folds into the CTLH domain. The segment at 330-403 (CTKEDPLSQE…NGGKITCPRT (74 aa)) adopts an RING-Gid-type zinc-finger fold.

As to quaternary structure, interacts with RANBPM.

The protein resides in the cytoplasm. This Arabidopsis thaliana (Mouse-ear cress) protein is Protein MAEA homolog.